Consider the following 549-residue polypeptide: MAAKDVLFGNDARVKMLRGVNILADAVKVTLGPKGRNVVIDKSFGGPIITKDGVTVAKEIELEDKFENMGAQMVKEVASKANDEAGDGTTTATVLAQAIVNEGLKSIAAGMNPMDLKRGIDKAVIAAVEALKESSTPVTDNKAIEQVGTISANSDETVGKIIATAMEKVGTEGVITVEEGQALTDELDVVEGMQFDRGYLSPYFINKQENGTVELENPFILLVDKKISNIRELLTTLEGVAKAGKPLLIIAEDVEGEALATLVVNNMRGIVKVAAVKAPGFGDRRKAMLQDVATLTAGTVISEEIGMELEKVTLEDLGQAKRVVISKDTTIIIDGIGVEADIQARVSQIRGQIEDSSSDYDKEKLQERLAKLAGGVAVIKIGAATEMEMKEKKSRVEDALHATRAAVEEGVVAGGGVALIRAADAIKDLEGANEDQTHGINVAIRAMEAPLRQIVANCGDEPSVVLNEVRNGKGNYGYNAGNSTYGDMIEMGILDPTKVTRSALQFAASVAGLMLTTEAMITDAPVKDAGGMPDMSGMGGGMGGMGGMM.

ATP contacts are provided by residues 30-33, lysine 51, 87-91, glycine 415, and aspartate 495; these read TLGP and DGTTT.

It belongs to the chaperonin (HSP60) family. In terms of assembly, forms a cylinder of 14 subunits composed of two heptameric rings stacked back-to-back. Interacts with the co-chaperonin GroES.

The protein resides in the cytoplasm. The enzyme catalyses ATP + H2O + a folded polypeptide = ADP + phosphate + an unfolded polypeptide.. In terms of biological role, together with its co-chaperonin GroES, plays an essential role in assisting protein folding. The GroEL-GroES system forms a nano-cage that allows encapsulation of the non-native substrate proteins and provides a physical environment optimized to promote and accelerate protein folding. This is Chaperonin GroEL from Colwellia maris.